Consider the following 261-residue polypeptide: N-acetyltransferase ECO1 (261 aa).

The CCHH-type zinc-finger motif lies at 29-53 (LKCPKCEMKYSPNSIDDVATHKKYH). The N-acetyltransferase domain maps to 102–261 (VMIQENKPAE…SGHILIPCYL (160 aa)).

It belongs to the acetyltransferase family. ECO subfamily.

The protein localises to the nucleus. Probable acetyltransferase required for the establishment of sister chromatid cohesion and couple the processes of cohesion and DNA replication to ensure that only sister chromatids become paired together. In contrast to the structural cohesins, the deposition and establishment factors are required only during S phase. Acts by acetylating the cohesin complex component SMC3. In Candida glabrata (strain ATCC 2001 / BCRC 20586 / JCM 3761 / NBRC 0622 / NRRL Y-65 / CBS 138) (Yeast), this protein is N-acetyltransferase ECO1 (ECO1).